Here is a 201-residue protein sequence, read N- to C-terminus: Recombination protein RecR (201 aa).

The C4-type zinc finger occupies 57 to 72 (CCDCRTFTEEERCTIC). The Toprim domain maps to 81–176 (GQICVVESPA…AASRIAHGVP (96 aa)).

This sequence belongs to the RecR family.

In terms of biological role, may play a role in DNA repair. It seems to be involved in an RecBC-independent recombinational process of DNA repair. It may act with RecF and RecO. The chain is Recombination protein RecR from Proteus mirabilis (strain HI4320).